Here is a 280-residue protein sequence, read N- to C-terminus: UDP-3-O-acyl-N-acetylglucosamine deacetylase (280 aa).

His77, His238, and Asp242 together coordinate Zn(2+). The active-site Proton donor is His265.

It belongs to the LpxC family. The cofactor is Zn(2+).

It carries out the reaction a UDP-3-O-[(3R)-3-hydroxyacyl]-N-acetyl-alpha-D-glucosamine + H2O = a UDP-3-O-[(3R)-3-hydroxyacyl]-alpha-D-glucosamine + acetate. It functions in the pathway glycolipid biosynthesis; lipid IV(A) biosynthesis; lipid IV(A) from (3R)-3-hydroxytetradecanoyl-[acyl-carrier-protein] and UDP-N-acetyl-alpha-D-glucosamine: step 2/6. In terms of biological role, catalyzes the hydrolysis of UDP-3-O-myristoyl-N-acetylglucosamine to form UDP-3-O-myristoylglucosamine and acetate, the committed step in lipid A biosynthesis. The protein is UDP-3-O-acyl-N-acetylglucosamine deacetylase of Trichormus variabilis (strain ATCC 29413 / PCC 7937) (Anabaena variabilis).